Here is a 260-residue protein sequence, read N- to C-terminus: Triosephosphate isomerase (260 aa).

Residue 11–13 (NWK) coordinates substrate. His103 acts as the Electrophile in catalysis. The active-site Proton acceptor is the Glu175. Substrate contacts are provided by residues Gly181, Ser220, and 241 to 242 (GG).

This sequence belongs to the triosephosphate isomerase family. In terms of assembly, homodimer.

The protein localises to the cytoplasm. The enzyme catalyses D-glyceraldehyde 3-phosphate = dihydroxyacetone phosphate. Its pathway is carbohydrate biosynthesis; gluconeogenesis. It functions in the pathway carbohydrate degradation; glycolysis; D-glyceraldehyde 3-phosphate from glycerone phosphate: step 1/1. In terms of biological role, involved in the gluconeogenesis. Catalyzes stereospecifically the conversion of dihydroxyacetone phosphate (DHAP) to D-glyceraldehyde-3-phosphate (G3P). In Shewanella loihica (strain ATCC BAA-1088 / PV-4), this protein is Triosephosphate isomerase.